The chain runs to 213 residues: Macrodontain-1 (213 aa).

Cystine bridges form between C23-C63, C57-C96, and C153-C201. C26 is a catalytic residue. Active-site residues include H159 and N176.

Monomer. In terms of tissue distribution, fruits.

Inhibited by the general cysteine protease inhibitor E64 (L-trans-epoxysuccinyl-leucylamide-(4-guanido)-butane). Cysteine protease that catalyzes the preferential cleavage: Ala-|-Xaa &gt; Gln-|-Xaa &gt; Tyr-Xaa &gt;&gt; Leu-|-Xaa &gt; Gly-|-Xaa. Hydrolyzes the synthetic peptide substrate Bz-Phe-Val-Arg-pNA. The polypeptide is Macrodontain-1 (Ananas macrodontes (False pineapple)).